The sequence spans 407 residues: Aminoacylase-1 (407 aa).

Residue Ala2 is modified to N-acetylalanine. A Zn(2+)-binding site is contributed by His80. Asp82 is an active-site residue. Residue Asp113 coordinates Zn(2+). Catalysis depends on Glu147, which acts as the Proton acceptor. Glu148, Glu175, and His372 together coordinate Zn(2+).

Belongs to the peptidase M20A family. In terms of assembly, homodimer. Interacts with SPHK1. Zn(2+) serves as cofactor.

It is found in the cytoplasm. The catalysed reaction is an N-acyl-L-amino acid + H2O = an L-alpha-amino acid + a carboxylate. The enzyme catalyses N-acetyl-L-methionine + H2O = L-methionine + acetate. It carries out the reaction N-acetyl-L-glutamine + H2O = L-glutamine + acetate. In terms of biological role, catalyzes the hydrolysis of N-acetylated amino acids to acetate and free amino acids. In Sus scrofa (Pig), this protein is Aminoacylase-1 (ACY1).